Consider the following 735-residue polypeptide: Transcription factor RFX4 (735 aa).

A disordered region spans residues 27 to 59; that stretch reads NKRYSSHTSLGNVSNDENEEKENNRASKPHSTP. Polar residues predominate over residues 32-41; sequence SHTSLGNVSN. The DNA-binding element occupies 44 to 126; that stretch reads NEEKENNRAS…RRLGTRGQSK (83 aa). A DNA-binding region (RFX-type winged-helix) is located at residues 61-136; the sequence is TLQWLEENYE…YHYYGIAVKE (76 aa). The necessary for dimerization stretch occupies residues 315-487; the sequence is RFSQILRRQT…NELMRAMKGE (173 aa). Residues 501 to 538 form a disordered region; it reads EATPPTPSPGPSFSPAKSATSVEVPPPSSPVSNPSPEY.

It belongs to the RFX family. Homodimer. Heterodimer with RFX2 and RFX3. Binds DNA. Interacts with GPS2. As to expression, isoform 1: Brain-specific. Isoform 2: Testis-specific. Isoform 1: Highly expressed in the suprachiasmatic nucleus, the central pacemaker site of the circadian clock (at protein level).

The protein localises to the nucleus. Its function is as follows. Transcription factor that plays a role in early brain development. May activate transcription by interacting directly with the X-box. May activate transcription from CX3CL1 promoter through the X-box during brain development. May be required for neural tube ciliogenesis during embryogenesis. This Mus musculus (Mouse) protein is Transcription factor RFX4 (Rfx4).